Here is a 244-residue protein sequence, read N- to C-terminus: tRNA (guanine-N(1)-)-methyltransferase (244 aa).

S-adenosyl-L-methionine is bound by residues Gly-112 and 132–137; that span reads IGDYIL.

Belongs to the RNA methyltransferase TrmD family. As to quaternary structure, homodimer.

It localises to the cytoplasm. It catalyses the reaction guanosine(37) in tRNA + S-adenosyl-L-methionine = N(1)-methylguanosine(37) in tRNA + S-adenosyl-L-homocysteine + H(+). Its function is as follows. Specifically methylates guanosine-37 in various tRNAs. This Geobacillus kaustophilus (strain HTA426) protein is tRNA (guanine-N(1)-)-methyltransferase.